A 400-amino-acid chain; its full sequence is Elongation factor Tu (400 aa).

The tr-type G domain maps to 10 to 208 (KPHVNVGTIG…AMDNYIPDPQ (199 aa)). A G1 region spans residues 19–26 (GHIDHGKS). 19-26 (GHIDHGKS) contributes to the GTP binding site. Ser-26 lines the Mg(2+) pocket. Positions 60-64 (GITIN) are G2. Residues 81–84 (DCPG) are G3. GTP contacts are provided by residues 81–85 (DCPGH) and 136–139 (NKTD). The tract at residues 136 to 139 (NKTD) is G4. Residues 174 to 176 (SAL) form a G5 region.

This sequence belongs to the TRAFAC class translation factor GTPase superfamily. Classic translation factor GTPase family. EF-Tu/EF-1A subfamily. In terms of assembly, monomer.

Its subcellular location is the cytoplasm. The catalysed reaction is GTP + H2O = GDP + phosphate + H(+). Functionally, GTP hydrolase that promotes the GTP-dependent binding of aminoacyl-tRNA to the A-site of ribosomes during protein biosynthesis. This Thermotoga maritima (strain ATCC 43589 / DSM 3109 / JCM 10099 / NBRC 100826 / MSB8) protein is Elongation factor Tu.